We begin with the raw amino-acid sequence, 268 residues long: Peptide transport system ATP-binding protein SapF (268 aa).

Residues Leu6 to Ile251 form the ABC transporter domain. Gly47–Ser54 is a binding site for ATP.

It belongs to the ABC transporter superfamily.

It is found in the cell inner membrane. Functionally, involved in a peptide intake transport system that plays a role in the resistance to antimicrobial peptides. In Salmonella typhimurium (strain LT2 / SGSC1412 / ATCC 700720), this protein is Peptide transport system ATP-binding protein SapF.